Here is a 261-residue protein sequence, read N- to C-terminus: Putative [LysW]-aminoadipate/[LysW]-glutamate kinase (261 aa).

Substrate contacts are provided by residues 35 to 36 (GG), Arg-62, and Asn-162.

It belongs to the acetylglutamate kinase family. LysZ subfamily.

The protein localises to the cytoplasm. It carries out the reaction [amino-group carrier protein]-C-terminal-N-(1,4-dicarboxybutan-1-yl)-L-glutamine + ATP = [amino-group carrier protein]-C-terminal-N-(1-carboxy-5-phosphooxy-5-oxopentan-1-yl)-L-glutamine + ADP. It catalyses the reaction [amino-group carrier protein]-C-terminal-gamma-(L-glutamyl)-L-glutamate + ATP = [amino-group carrier protein]-C-terminal-gamma-(5-phospho-L-glutamyl)-L-glutamate + ADP. Its pathway is amino-acid biosynthesis; L-lysine biosynthesis via AAA pathway; L-lysine from L-alpha-aminoadipate (Thermus route): step 2/5. It functions in the pathway amino-acid biosynthesis; L-arginine biosynthesis. In terms of biological role, involved in both the arginine and lysine biosynthetic pathways. Phosphorylates the LysW-bound precursors glutamate (for arginine biosynthesis), respectively alpha-aminoadipate (for lysine biosynthesis). This is Putative [LysW]-aminoadipate/[LysW]-glutamate kinase from Pyrobaculum calidifontis (strain DSM 21063 / JCM 11548 / VA1).